The chain runs to 1336 residues: Putative botulinum-like toxin Wo (1336 aa).

Residues 1 to 476 (MDVLEMFDVN…VAGMQRMVSL (476 aa)) form a has protease activity region. Histidine 250 contributes to the Zn(2+) binding site. The active site involves glutamate 251. Histidine 254 and glutamate 296 together coordinate Zn(2+).

Belongs to the peptidase M27 family. Requires Zn(2+) as cofactor.

It carries out the reaction Limited hydrolysis of proteins of the neuroexocytosis apparatus, synaptobrevins, SNAP25 or syntaxin. No detected action on small molecule substrates.. Inhibited by EDTA and 1,10-phenanthroline. When overexpressed the N-terminus (residues 1-476) cleaves rat synaptobrevin-2/VAMP2 between '89-Trp-|-Trp-90' in vitro. This releases the cytoplasmic domain of VAMP2 from the synaptic vesicle membrane, which would prevent the assembly of the trans-SNARE complex on the membrane and thus prevent vesicle-target membrane fusion and neurotransmitter release. In Weissella oryzae (strain DSM 25784 / JCM 18191 / LMG 30913 / SG25), this protein is Putative botulinum-like toxin Wo.